The chain runs to 365 residues: MELDFGHFDERDKTSRNMRGSRMNGLPSPTHSAHCSFYRTRTLQALSNEKKAKKVRFYRNGDRYFKGIVYAVSSDRFRSFDALLADLTRSLSDNINLPQGVRYIYTIDGSRKIGSMDELEEGESYVCSSDNFFKKVEYTKNVNPNWSVNVKTSANMKAPQSLASSNSAQARENKDFVRPKLVTIIRSGVKPRKAVRVLLNKKTAHSFEQVLTDITEAIKLETGVVKKLYTLDGKQVTCLHDFFGDDDVFIACGPEKFRYAQDDFSLDENECRVMKGNPSATAGPKASPTPQKTSAKSPGPMRRSKSPADSGNDQDANGTSSSQLSTPKSKQSPISTPTSPGSLRKHKDLYLPLSLDDSDSLGDSM.

Positions 11 to 31 (RDKTSRNMRGSRMNGLPSPTH) are disordered. Phosphothreonine; by PKC is present on T14. Position 28 is a phosphoserine; by CDK5 (S28). S47 is modified (phosphoserine; by MARK1 and PKA). 2 Doublecortin domains span residues 53–139 (KKVR…VEYT) and 180–263 (KLVT…AQDD). Y70 is subject to Phosphotyrosine; by ABL. Phosphoserine; by PKC is present on S74. S90 is modified (phosphoserine; by CK2). Phosphoserine; by PKC is present on S110. Position 115 is a phosphoserine; by CK2, MARK1 and PKA (S115). S265 is subject to Phosphoserine; by CK2. The tract at residues 275–365 (KGNPSATAGP…DDSDSLGDSM (91 aa)) is disordered. Position 287 is a phosphoserine; by CDK5 (S287). T289 carries the phosphothreonine; by CDK5 modification. At S294 the chain carries Phosphoserine; by PKC. S297 bears the Phosphoserine; by CDK5 mark. The residue at position 306 (S306) is a Phosphoserine; by CK2. S306 bears the Phosphoserine; by DYRK2 mark. Polar residues predominate over residues 307-341 (PADSGNDQDANGTSSSQLSTPKSKQSPISTPTSPG). Residue T326 is modified to Phosphothreonine; by CDK5. Phosphothreonine; by PKC and MAPK is present on T326. S332 carries the post-translational modification Phosphoserine; by CDK5. S332 is modified (phosphoserine; by MAPK). Phosphothreonine; by MAPK is present on T336. Phosphoserine; by CDK5 is present on S339. S339 bears the Phosphoserine; by MAPK mark. S342 is modified (phosphoserine; by PKC). A phosphoserine; by CK2 mark is found at S354 and S360. Residues 356–365 (DDSDSLGDSM) show a composition bias toward acidic residues.

Interacts with tubulin. Interacts with USP9X. In terms of processing, phosphorylation by MARK1, MARK2 and PKA regulates its ability to bind microtubules. Phosphorylation at Ser-265 and Ser-297 seems to occur only in neonatal brain, the levels falling precipitously by postnatal day 21. Post-translationally, ubiquitinated by MDM2, leading to its degradation by the proteasome. Ubiquitinated by MDM2 and subsequent degradation leads to reduce the dendritic spine density of olfactory bulb granule cells. In terms of tissue distribution, highly expressed in neuronal cells of fetal brain (in the majority of cells of the cortical plate, intermediate zone and ventricular zone), but not expressed in other fetal tissues. In the adult, highly expressed in the brain frontal lobe, but very low expression in other regions of brain, and not detected in heart, placenta, lung, liver, skeletal muscles, kidney and pancreas.

It localises to the cytoplasm. The protein resides in the cell projection. The protein localises to the neuron projection. Functionally, microtubule-associated protein required for initial steps of neuronal dispersion and cortex lamination during cerebral cortex development. May act by competing with the putative neuronal protein kinase DCLK1 in binding to a target protein. May in that way participate in a signaling pathway that is crucial for neuronal interaction before and during migration, possibly as part of a calcium ion-dependent signal transduction pathway. May be part with PAFAH1B1/LIS-1 of overlapping, but distinct, signaling pathways that promote neuronal migration. This chain is Neuronal migration protein doublecortin (DCX), found in Homo sapiens (Human).